A 545-amino-acid chain; its full sequence is Membrane protein insertase YidC (545 aa).

4 helical membrane-spanning segments follow: residues 350 to 370, 424 to 444, 461 to 481, and 498 to 518; these read IIGNWGWAIIVLTIIVKAVLY, LPMLLQIPVFIGLYWALFASV, ADPYYILPIIMAATMFAQTYL, and PLVFSVMFFFFPAGLVLYWVI.

It belongs to the OXA1/ALB3/YidC family. Type 1 subfamily. As to quaternary structure, interacts with the Sec translocase complex via SecD. Specifically interacts with transmembrane segments of nascent integral membrane proteins during membrane integration.

The protein localises to the cell inner membrane. Its function is as follows. Required for the insertion and/or proper folding and/or complex formation of integral membrane proteins into the membrane. Involved in integration of membrane proteins that insert both dependently and independently of the Sec translocase complex, as well as at least some lipoproteins. Aids folding of multispanning membrane proteins. The protein is Membrane protein insertase YidC of Neisseria meningitidis serogroup A / serotype 4A (strain DSM 15465 / Z2491).